A 97-amino-acid chain; its full sequence is Putative CC-type chemokine U83 (97 aa).

Cystine bridges form between Cys32–Cys62 and Cys33–Cys76.

The protein belongs to the intercrine beta (chemokine CC) family. Highly divergent.

The polypeptide is Putative CC-type chemokine U83 (U83) (Homo sapiens (Human)).